Consider the following 350-residue polypeptide: uncharacterized protein (350 aa).

Helical transmembrane passes span Y10–G30, F51–T71, and I327–F347.

This sequence belongs to the 1-acyl-sn-glycerol-3-phosphate acyltransferase family.

The protein resides in the endoplasmic reticulum membrane. This is an uncharacterized protein from Schizosaccharomyces pombe (strain 972 / ATCC 24843) (Fission yeast).